A 193-amino-acid polypeptide reads, in one-letter code: UPF0301 protein SCO2948 (193 aa).

This sequence belongs to the UPF0301 (AlgH) family.

In Streptomyces coelicolor (strain ATCC BAA-471 / A3(2) / M145), this protein is UPF0301 protein SCO2948.